Here is a 233-residue protein sequence, read N- to C-terminus: C-type lectin domain-containing protein 87 (233 aa).

The N-terminal stretch at 1–19 is a signal peptide; it reads MRFCLLVAFILPGLFLVHA. A glycan (O-linked (Xyl...) (chondroitin sulfate) serine) is linked at S31. A glycan (N-linked (GlcNAc...) asparagine) is linked at N81. The C-type lectin domain maps to 93–223; that stretch reads FADSCYWIEK…CTYMLYSICE (131 aa). Intrachain disulfides connect C114-C222 and C193-C214. Residue N225 is glycosylated (N-linked (GlcNAc...) asparagine).

The protein is C-type lectin domain-containing protein 87 of Caenorhabditis elegans.